Here is a 104-residue protein sequence, read N- to C-terminus: Zinc-containing ferredoxin-2 (104 aa).

Residues 2–37 (GIDPNYRQNRQVVGEHEGHKIYGPVEPPGKLGIHGT) are N-terminal extension. Zn(2+) contacts are provided by H17, H20, and H35. 2 consecutive 4Fe-4S ferredoxin-type domains span residues 38-66 (IVGV…WFDT) and 75-104 (KADP…VKPP). [3Fe-4S] cluster-binding residues include C46 and C52. C56 lines the [4Fe-4S] cluster pocket. Residue D77 participates in Zn(2+) binding. [4Fe-4S] cluster is bound by residues C84, C87, and C90. C94 lines the [3Fe-4S] cluster pocket.

The cofactor is [3Fe-4S] cluster. [4Fe-4S] cluster is required as a cofactor. Requires Zn(2+) as cofactor.

Ferredoxins are iron-sulfur proteins that transfer electrons in a wide variety of metabolic reactions. In Sulfurisphaera tokodaii (strain DSM 16993 / JCM 10545 / NBRC 100140 / 7) (Sulfolobus tokodaii), this protein is Zinc-containing ferredoxin-2 (zfx2).